The chain runs to 87 residues: Probable acyl carrier protein PigG (87 aa).

The Carrier domain maps to 1–78 (MLESKLINHI…SMVALVQRLK (78 aa)). Ser36 is modified (O-(pantetheine 4'-phosphoryl)serine).

The protein operates within antibiotic biosynthesis; prodigiosin biosynthesis. Involved in the biosynthesis of 4-methoxy-2,2'-bipyrrole-5-carbaldehyde (MBC), one of the terminal products involved in the biosynthesis of the red antibiotic prodigiosin (Pig). Carrier of the L-prolyl group transferred from L-prolyl-AMP by PigI. This is Probable acyl carrier protein PigG from Serratia sp. (strain ATCC 39006) (Prodigiosinella confusarubida).